A 282-amino-acid chain; its full sequence is MSQKKSPRFELRSGNVDALLLALNTADLDAVRDDLLSRFESTPDFFSDDVVALDLRRLEGTGALALDRVIDTLATLKARAIGVVARADQRDWAGGFGLPLLDSQSRRGGKDEAPKEKAGKPEATAASGQTDAEAAGNTGKGKDSEGAAVNGKASEIAEIMAAANAASAPRAIPTLLIDKPLRSGQQIYAQGDVVILDLVSYGAEVIAEGNIHIYAPLRGRALAGVKGNPDARIFCTCLEPELISIAGIYRTAEQTLPADVLGKSAQVRLADEKLILEPLRMK.

Residues 103–147 (SQSRRGGKDEAPKEKAGKPEATAASGQTDAEAAGNTGKGKDSEGA) are disordered. A compositionally biased stretch (basic and acidic residues) spans 104 to 120 (QSRRGGKDEAPKEKAGK).

It belongs to the MinC family. Interacts with MinD and FtsZ.

Cell division inhibitor that blocks the formation of polar Z ring septums. Rapidly oscillates between the poles of the cell to destabilize FtsZ filaments that have formed before they mature into polar Z rings. Prevents FtsZ polymerization. This Cupriavidus metallidurans (strain ATCC 43123 / DSM 2839 / NBRC 102507 / CH34) (Ralstonia metallidurans) protein is Probable septum site-determining protein MinC.